A 153-amino-acid chain; its full sequence is Pheromone-binding protein Gp-9 (153 aa).

A signal peptide spans 1–19; the sequence is MKTFVLHIFIFALVAFASA. Disulfide bonds link Cys37/Cys77, Cys73/Cys129, and Cys118/Cys138.

This sequence belongs to the PBP/GOBP family. As to quaternary structure, homodimer.

The protein resides in the secreted. Functionally, colony queen number, a major feature of social organization, is associated with worker genotype for Gp-9. Colonies are headed by either a single reproductive queen (monogyne form) or multiple queens (polygyne form). Differences in worker Gp-9 genotypes between social forms may cause differences in workers' abilities to recognize queens and regulate their numbers. The sequence is that of Pheromone-binding protein Gp-9 from Solenopsis substituta (Fire ant).